Here is a 345-residue protein sequence, read N- to C-terminus: S-adenosylmethionine:tRNA ribosyltransferase-isomerase (345 aa).

This sequence belongs to the QueA family. As to quaternary structure, monomer.

The protein localises to the cytoplasm. The catalysed reaction is 7-aminomethyl-7-carbaguanosine(34) in tRNA + S-adenosyl-L-methionine = epoxyqueuosine(34) in tRNA + adenine + L-methionine + 2 H(+). It functions in the pathway tRNA modification; tRNA-queuosine biosynthesis. Functionally, transfers and isomerizes the ribose moiety from AdoMet to the 7-aminomethyl group of 7-deazaguanine (preQ1-tRNA) to give epoxyqueuosine (oQ-tRNA). This chain is S-adenosylmethionine:tRNA ribosyltransferase-isomerase, found in Shewanella oneidensis (strain ATCC 700550 / JCM 31522 / CIP 106686 / LMG 19005 / NCIMB 14063 / MR-1).